The chain runs to 466 residues: ATP synthase subunit beta (466 aa).

156–163 (GGAGVGKT) contacts ATP.

It belongs to the ATPase alpha/beta chains family. F-type ATPases have 2 components, CF(1) - the catalytic core - and CF(0) - the membrane proton channel. CF(1) has five subunits: alpha(3), beta(3), gamma(1), delta(1), epsilon(1). CF(0) has three main subunits: a(1), b(2) and c(9-12). The alpha and beta chains form an alternating ring which encloses part of the gamma chain. CF(1) is attached to CF(0) by a central stalk formed by the gamma and epsilon chains, while a peripheral stalk is formed by the delta and b chains.

It is found in the cell inner membrane. The enzyme catalyses ATP + H2O + 4 H(+)(in) = ADP + phosphate + 5 H(+)(out). Functionally, produces ATP from ADP in the presence of a proton gradient across the membrane. The catalytic sites are hosted primarily by the beta subunits. In Dechloromonas aromatica (strain RCB), this protein is ATP synthase subunit beta.